The primary structure comprises 141 residues: Large ribosomal subunit protein uL11 (141 aa).

Residues 1–23 (MAKQVTGQAKFQVPGGQATPAPP) form a disordered region.

Belongs to the universal ribosomal protein uL11 family. In terms of assembly, part of the ribosomal stalk of the 50S ribosomal subunit. Interacts with L10 and the large rRNA to form the base of the stalk. L10 forms an elongated spine to which L12 dimers bind in a sequential fashion forming a multimeric L10(L12)X complex. One or more lysine residues are methylated.

Its function is as follows. Forms part of the ribosomal stalk which helps the ribosome interact with GTP-bound translation factors. The polypeptide is Large ribosomal subunit protein uL11 (Rhodopirellula baltica (strain DSM 10527 / NCIMB 13988 / SH1)).